Here is a 395-residue protein sequence, read N- to C-terminus: FAD-dependent monooxygenase cctM (395 aa).

The signal sequence occupies residues 1-23 (MEPGTDVRRVLVIGAGAAGLLIA). Residues Glu37, Gly52, and Arg112 each contribute to the FAD site. Asn138 and Asn298 each carry an N-linked (GlcNAc...) asparagine glycan. Residue Asp306 coordinates FAD.

Belongs to the paxM FAD-dependent monooxygenase family. Requires FAD as cofactor.

Its pathway is mycotoxin biosynthesis. FAD-dependent monooxygenase; part of the gene cluster that mediates the biosynthesis of the mycotoxin cyclochlorotine, a hepatotoxic and carcinogenic cyclic chlorinated pentapeptide. The function of cctM within the pathway, if any, remains undetermined. The NRPS cctN initially catalyzes the condensation of L-serine (Ser), Pro, L-2-aminobutyrate (2Abu), Ser, and beta-Phe in this order to produce isocyclotine. After the dichlorination of Pro2 catalyzed by cctP2 to produce isocyclochlorotine, the cctO-mediated transacylation of isocyclochlorotine can furnish cyclochlorotine. The subsequent hydroxylation of cyclochlorotine by cctR yields hydroxycyclochlorotine as the final product. CctP1 probably acts as a phenylalanine aminomutase and provides the uncommon building block beta-Phe. Furthermore, 2Abu can be synthesized from threonine by one of the threonine dehydratases and transaminases localized outside of the cluster. The functions of the remaining proteins encoded by the cluster, cctM and cctT, have not been identified yet. The sequence is that of FAD-dependent monooxygenase cctM from Talaromyces islandicus (Penicillium islandicum).